An 87-amino-acid polypeptide reads, in one-letter code: Large ribosomal subunit protein eL33 (87 aa).

It belongs to the eukaryotic ribosomal protein eL33 family.

This is Large ribosomal subunit protein eL33 from Pyrococcus woesei.